The following is a 631-amino-acid chain: Forkhead box protein O1 (631 aa).

Residues 1–11 (MAEAPQPPPPL) show a composition bias toward pro residues. Disordered regions lie at residues 1 to 57 (MAEA…PAAG), 90 to 147 (DIRQ…SRRN), 223 to 324 (SSWW…MPEQ), and 372 to 404 (PNSSTQSSPASMMQQSGYLFTSPNTSLGSPNSE). Low complexity-rich tracts occupy residues 37–48 (NPSSSANSSPAP) and 100–135 (QQQQQHSQQQQEALTLLAPSVPSALSPASSPSPLGA). A DNA-binding region (fork-head) is located at residues 149–243 (WGNLSYADLI…KNGKSPRRRA (95 aa)). Residues 253–264 (AKSRGRAAKKKA) show a composition bias toward basic residues. Over residues 265–282 (SMQSSQDGSSDSPGSQFS) the composition is skewed to low complexity. 2 stretches are compositionally biased toward polar residues: residues 303 to 315 (RPRTSSNASTISG) and 381 to 403 (ASMMQQSGYLFTSPNTSLGSPNS).

In terms of processing, phosphorylated by AKT1; insulin-induced. Post-translationally, IGF1 rapidly induces phosphorylation of Thr-28, Ser-245 and Ser-308. Phosphorylation of Ser-245 decreases DNA-binding activity and promotes the phosphorylation of Thr-28, and Ser-308, which leads to nuclear exclusion and loss of function. Phosphorylation of Ser-318 is independent of IGF1 and leads to reduced function. Localized to the animal hemisphere during early cleavage stages. At early tadpole stages, expressed in the branchial arches, pronephros and liver. Within the head, expressed in the forming thyroid gland and in head mesenchyme anterior to the eyes.

The protein localises to the cytoplasm. It localises to the nucleus. Its function is as follows. Transcription factor that regulates metabolic homeostasis in response to oxidative stress. Binds to the consensus sequence 5'-TT[G/A]TTTTG-3' and the related Daf-16 family binding element (DBE) with consensus sequence 5'-TT[G/A]TTTAC-3'. Main regulator of redox balance and osteoblast numbers and controls bone mass. Orchestrates the endocrine function of the skeleton in regulating glucose metabolism. Also acts as a key regulator of chondrogenic commitment of skeletal progenitor cells in response to lipid availability: when lipids levels are low, translocates to the nucleus and promotes expression of sox9, which induces chondrogenic commitment and suppresses fatty acid oxidation. Acts synergistically with atf4 to suppress osteocalcin/bglap activity, increasing glucose levels and triggering glucose intolerance and insulin insensitivity. Also suppresses the transcriptional activity of runx2, an upstream activator of osteocalcin/bglap. May act as a positive regulator of apoptosis in cardiac smooth muscle cells as a result of its transcriptional activation of pro-apoptotic genes. The chain is Forkhead box protein O1 from Xenopus laevis (African clawed frog).